A 211-amino-acid chain; its full sequence is Small ribosomal subunit protein uS3 (211 aa).

The KH type-2 domain maps to Leu38–Arg106.

The protein belongs to the universal ribosomal protein uS3 family. Part of the 30S ribosomal subunit. Forms a tight complex with proteins S10 and S14.

Binds the lower part of the 30S subunit head. Binds mRNA in the 70S ribosome, positioning it for translation. This Geobacter sp. (strain M21) protein is Small ribosomal subunit protein uS3.